Consider the following 176-residue polypeptide: Ribosome rescue factor SmrB (176 aa).

Residues 93-168 (LDLHGYRQSE…GDAALLVLID (76 aa)) enclose the Smr domain.

This sequence belongs to the SmrB family. In terms of assembly, associates with collided ribosomes, but not with correctly translating polysomes.

In terms of biological role, acts as a ribosome collision sensor. Detects stalled/collided disomes (pairs of ribosomes where the leading ribosome is stalled and a second ribosome has collided with it) and endonucleolytically cleaves mRNA at the 5' boundary of the stalled ribosome. Stalled/collided disomes form a new interface (primarily via the 30S subunits) that binds SmrB. Cleaved mRNA becomes available for tmRNA ligation, leading to ribosomal subunit dissociation and rescue of stalled ribosomes. The polypeptide is Ribosome rescue factor SmrB (Shewanella baltica (strain OS155 / ATCC BAA-1091)).